Here is a 419-residue protein sequence, read N- to C-terminus: MKLNFSLRLRVFNLNCWDIPYLSKHRADRMKRLGDFLNLENFDLALLEEVWSEQDFQYLRQRLSLTYPDAHYFRSGMIGSGLCVFSKHPIQEIFQHVYSLNGYPYMFHHGDWFCGKSVGLLVLRLSGLVLNAYVTHLHAEYSRQKDIYFAHRVAQAWELAQFIHHTSKNADVVLLCGDLNMHPKDLGCCLLKEWTGLHDAFVETEDFKGSDDGCTMVPKNCYVSQQDLGPFPSGIRIDYVLYKAVSEFHVCCETLKTTTGCDPHSDKPFSDHEALMATLYVKHSPPQEDPCTACGPLERSDLISVLREARTELGLGIAKARWWAAFSGYVIVWGLSLLVLLCVLAAGEEAREVAIILCIPSVGLVLVAGAVYLFHKQEAKGLCRAQAEMLHVLTRETETQDRGSEPHLAYCLQQEGDRA.

Glu49 serves as a coordination point for Mg(2+). Catalysis depends on His272, which acts as the Proton acceptor. The next 2 membrane-spanning stretches (helical) occupy residues Phe326–Ala346 and Ala354–Phe374.

This sequence belongs to the neutral sphingomyelinase family. Requires Mg(2+) as cofactor. In terms of tissue distribution, although widely expressed in all tissues examined, except the spleen, high enzymatic activity occurs only in the brain.

Its subcellular location is the cell membrane. It catalyses the reaction a sphingomyelin + H2O = phosphocholine + an N-acylsphing-4-enine + H(+). The enzyme catalyses an N-(acyl)-sphingosylphosphocholine + H2O = an N-acyl-sphingoid base + phosphocholine + H(+). It carries out the reaction 1-O-octadecyl-sn-glycero-3-phosphocholine + H2O = 1-O-octadecyl-sn-glycerol + phosphocholine + H(+). The catalysed reaction is 1-hexadecanoyl-sn-glycero-3-phosphocholine + H2O = 1-hexadecanoyl-sn-glycerol + phosphocholine + H(+). It catalyses the reaction a sphingosylphosphocholine + H2O = a sphingoid base + phosphocholine + H(+). The enzyme catalyses 1-O-hexadecyl-sn-glycero-3-phosphocholine + H2O = 1-O-hexadecyl-sn-glycerol + phosphocholine + H(+). Its pathway is lipid metabolism; sphingolipid metabolism. With respect to regulation, activated by arachidonic acid. Functionally, catalyzes, at least in vitro, the hydrolysis of sphingomyelin to form ceramide and phosphocholine. Also hydrolyzes 1-O-alkyl-2-lyso-sn-glycero-3-phosphocholine (lyso-platelet-activating factor) in vivo. Also acts on 1-acyl-2-lyso-sn-glycero-3-phosphocholine (lyso-PC) and sphingosylphosphocholine. This is Sphingomyelin phosphodiesterase 2 from Mus musculus (Mouse).